A 532-amino-acid polypeptide reads, in one-letter code: GH3 domain-containing protein (532 aa).

The signal sequence occupies residues 1–18 (MLLLWLLLLLLLLVPLLA). Residues 100–123 (LTQTSHTQEQESEETLPSPASPQY) are disordered. N356 and N451 each carry an N-linked (GlcNAc...) asparagine glycan.

It belongs to the GH3 family. Highly expressed in mammary tissues from mature virgins and at day 13 of pregnancy, and at lower level during lactation. Expressed at intermediate level in liver. Expressed at lower level in kidney, heart and brain.

Its subcellular location is the endoplasmic reticulum. The protein resides in the nucleus envelope. This chain is GH3 domain-containing protein (Ghdc), found in Mus musculus (Mouse).